The following is a 355-amino-acid chain: Chorismate synthase (355 aa).

Arg48 contacts NADP(+). FMN contacts are provided by residues 126–128 (RSS), Gly278, 293–297 (KPIPS), and Arg319.

Belongs to the chorismate synthase family. Homotetramer. The cofactor is FMNH2.

The enzyme catalyses 5-O-(1-carboxyvinyl)-3-phosphoshikimate = chorismate + phosphate. Its pathway is metabolic intermediate biosynthesis; chorismate biosynthesis; chorismate from D-erythrose 4-phosphate and phosphoenolpyruvate: step 7/7. Functionally, catalyzes the anti-1,4-elimination of the C-3 phosphate and the C-6 proR hydrogen from 5-enolpyruvylshikimate-3-phosphate (EPSP) to yield chorismate, which is the branch point compound that serves as the starting substrate for the three terminal pathways of aromatic amino acid biosynthesis. This reaction introduces a second double bond into the aromatic ring system. The chain is Chorismate synthase from Oleidesulfovibrio alaskensis (strain ATCC BAA-1058 / DSM 17464 / G20) (Desulfovibrio alaskensis).